The primary structure comprises 268 residues: 4-hydroxy-tetrahydrodipicolinate reductase (268 aa).

NAD(+)-binding positions include 10 to 15 and D36; that span reads GASGRM. R37 contacts NADP(+). Residues 99–101 and 123–126 each bind NAD(+); these read GTT and SANM. The Proton donor/acceptor role is filled by H156. (S)-2,3,4,5-tetrahydrodipicolinate is bound at residue H157. K160 (proton donor) is an active-site residue. 166 to 167 is a (S)-2,3,4,5-tetrahydrodipicolinate binding site; the sequence is GT.

This sequence belongs to the DapB family.

The protein resides in the cytoplasm. The enzyme catalyses (S)-2,3,4,5-tetrahydrodipicolinate + NAD(+) + H2O = (2S,4S)-4-hydroxy-2,3,4,5-tetrahydrodipicolinate + NADH + H(+). It carries out the reaction (S)-2,3,4,5-tetrahydrodipicolinate + NADP(+) + H2O = (2S,4S)-4-hydroxy-2,3,4,5-tetrahydrodipicolinate + NADPH + H(+). The protein operates within amino-acid biosynthesis; L-lysine biosynthesis via DAP pathway; (S)-tetrahydrodipicolinate from L-aspartate: step 4/4. Catalyzes the conversion of 4-hydroxy-tetrahydrodipicolinate (HTPA) to tetrahydrodipicolinate. The protein is 4-hydroxy-tetrahydrodipicolinate reductase of Burkholderia mallei (strain NCTC 10247).